The following is a 479-amino-acid chain: Ubiquinone biosynthesis monooxygenase COQ6, mitochondrial (479 aa).

The protein belongs to the UbiH/COQ6 family. As to quaternary structure, component of a multi-subunit COQ enzyme complex, composed of at least COQ3, COQ4, COQ5, COQ6, COQ7 and COQ9. FAD serves as cofactor.

The protein resides in the mitochondrion inner membrane. It catalyses the reaction 4-hydroxy-3-(all-trans-decaprenyl)benzoate + 2 reduced [2Fe-2S]-[ferredoxin] + O2 + 2 H(+) = 3,4-dihydroxy-5-(all-trans-decaprenyl)benzoate + 2 oxidized [2Fe-2S]-[ferredoxin] + H2O. It carries out the reaction 2-methoxy-6-(all-trans-decaprenyl)phenol + 2 reduced [2Fe-2S]-[ferredoxin] + O2 + 2 H(+) = 2-methoxy-6-(all-trans-decaprenyl)benzene-1,4-diol + 2 oxidized [2Fe-2S]-[ferredoxin] + H2O. Its pathway is cofactor biosynthesis; ubiquinone biosynthesis. FAD-dependent monooxygenase required for two non-consecutive steps during ubiquinone biosynthesis. Required for the C5-ring hydroxylation during ubiquinone biosynthesis by catalyzing the hydroxylation of 4-hydroxy-3-(all-trans-decaprenyl)benzoic acid to 3,4-dihydroxy-5-(all-trans-decaprenyl)benzoic acid. Also acts downstream of COQ4, for the C1-hydroxylation during ubiquinone biosynthesis by catalyzing the hydroxylation of 2-methoxy-6-(all-trans-decaprenyl)phenol to 2-methoxy-6-(all-trans-decaprenyl)benzene-1,4-diol. The electrons required for the hydroxylation reaction are funneled indirectly to coq6 from NADPH via a ferredoxin/ferredoxin reductase system. This is Ubiquinone biosynthesis monooxygenase COQ6, mitochondrial from Schizosaccharomyces pombe (strain 972 / ATCC 24843) (Fission yeast).